The chain runs to 85 residues: DNA-directed RNA polymerase subunit omega (85 aa).

Belongs to the RNA polymerase subunit omega family. The RNAP catalytic core consists of 2 alpha, 1 beta, 1 beta' and 1 omega subunit. When a sigma factor is associated with the core the holoenzyme is formed, which can initiate transcription.

The catalysed reaction is RNA(n) + a ribonucleoside 5'-triphosphate = RNA(n+1) + diphosphate. Promotes RNA polymerase assembly. Latches the N- and C-terminal regions of the beta' subunit thereby facilitating its interaction with the beta and alpha subunits. This is DNA-directed RNA polymerase subunit omega from Latilactobacillus sakei subsp. sakei (strain 23K) (Lactobacillus sakei subsp. sakei).